The sequence spans 742 residues: Synaptic vesicle glycoprotein 2A (742 aa).

The interaction with SYT1 stretch occupies residues 1–57 (MEEGFRDRAAFIRGAKDIAKEVKKHAAKKVVKGLDRVQDEYSRRSYSRFEEEDDDDD). Residues 1–169 (MEEGFRDRAA…GHGRFQWTLY (169 aa)) lie on the Cytoplasmic side of the membrane. Residues 40–49 (EYSRRSYSRF) are compositionally biased toward basic and acidic residues. Residues 40 to 145 (EYSRRSYSRF…RGEAQRRKDR (106 aa)) are disordered. Residues Ser-80 and Ser-81 each carry the phosphoserine modification. Phosphothreonine is present on Thr-84. Residues 122–137 (VRGGLSDGEGPPGGRG) are compositionally biased toward gly residues. Residue Ser-127 is modified to Phosphoserine. Residues 170-190 (FVLGLALMADGVEVFVVGFVL) form a helical membrane-spanning segment. The Extracellular segment spans residues 191-205 (PSAEKDMCLSDSNKG). The chain crosses the membrane as a helical span at residues 206–226 (MLGLIVYLGMMVGAFLWGGLA). The Cytoplasmic portion of the chain corresponds to 227–233 (DRLGRRQ). Residues 234–254 (CLLISLSVNSVFAFFSSFVQG) traverse the membrane as a helical segment. Over 255–262 (YGTFLFCR) the chain is Extracellular. The helical transmembrane segment at 263-283 (LLSGVGIGGSIPIVFSYFSEF) threads the bilayer. The Cytoplasmic segment spans residues 284-294 (LAQEKRGEHLS). The helical transmembrane segment at 295–315 (WLCMFWMIGGVYAAAMAWAII) threads the bilayer. Residues 316 to 334 (PHYGWSFQMGSAYQFHSWR) lie on the Extracellular side of the membrane. The chain crosses the membrane as a helical span at residues 335 to 355 (VFVLVCAFPSVFAIGALTTQP). Residues 356–447 (ESPRFFLENG…CFSPEYRRIT (92 aa)) are Cytoplasmic-facing. The residue at position 393 (Ser-393) is a Phosphoserine. Residues 448 to 468 (LMMMGVWFTMSFSYYGLTVWF) traverse the membrane as a helical segment. Topologically, residues 469–598 (PDMIRHLQAV…GTGEGAYMVY (130 aa)) are extracellular. Tyr-480 carries the post-translational modification Phosphotyrosine. 3 N-linked (GlcNAc...) asparagine glycosylation sites follow: Asn-498, Asn-548, and Asn-573. A helical transmembrane segment spans residues 599–619 (FVSFLGTLAVLPGNIVSALLM). Over 620–626 (DKIGRLR) the chain is Cytoplasmic. The chain crosses the membrane as a helical span at residues 627–647 (MLAGSSVLSCVSCFFLSFGNS). Residues 648–651 (ESAM) lie on the Extracellular side of the membrane. A helical membrane pass occupies residues 652–672 (IALLCLFGGVSIASWNALDVL). The Cytoplasmic segment spans residues 673-685 (TVELYPSDKRTTA). Residues 686-708 (FGFLNALCKLAAVLGISIFTSFV) form a helical membrane-spanning segment. The Extracellular portion of the chain corresponds to 709–712 (GITK). A helical transmembrane segment spans residues 713 to 731 (AAPILFASAALALGSSLAL). At 732-742 (KLPETRGQVLQ) the chain is on the cytoplasmic side.

The protein belongs to the major facilitator superfamily. As to quaternary structure, interacts with SYT1/synaptotagmin-1 in a calcium-dependent manner. Binds the adapter protein complex AP-2. In terms of assembly, (Microbial infection) Interacts with C.botulinum neurotoxin type A (BoNT/A, botA). Post-translationally, phosphorylation by CK1 of the N-terminal cytoplasmic domain regulates interaction with SYT1. In terms of processing, N-glycosylated. Expressed in conventional synapses and cone ribbon synapses in the retina (at protein level). Expressed in diaphragm motor nerve terminals (at protein level). Expressed in hippocampus neurons (at protein level).

It is found in the presynapse. The protein localises to the cytoplasmic vesicle. It localises to the secretory vesicle. The protein resides in the synaptic vesicle membrane. Functionally, plays a role in the control of regulated secretion in neural and endocrine cells, enhancing selectively low-frequency neurotransmission. Positively regulates vesicle fusion by maintaining the readily releasable pool of secretory vesicles. (Microbial infection) Receptor for C.botulinum neurotoxin type A (BoNT/A, botA); the toxin probably binds via extracellular loop 4. In terms of biological role, (Microbial infection) Possible receptor for C.botulinum neurotoxin type D (BoNT/D, botD); BoNT/D does not bind to extracellular loop 4 as do BoNT/A and BoNT/E. Its function is as follows. (Microbial infection) Receptor for C.botulinum neurotoxin type E (BoNT/E); the toxin probably binds via extracellular loop 4. It probably requires glycosylation of Asn-573. The sequence is that of Synaptic vesicle glycoprotein 2A (Sv2a) from Mus musculus (Mouse).